The primary structure comprises 356 residues: tRNA N6-adenosine threonylcarbamoyltransferase (356 aa).

2 residues coordinate Fe cation: histidine 115 and histidine 119. Substrate contacts are provided by residues 138–142, aspartate 171, glycine 184, and asparagine 283; that span reads LVSGG. A Fe cation-binding site is contributed by aspartate 311.

It belongs to the KAE1 / TsaD family. Fe(2+) is required as a cofactor.

The protein resides in the cytoplasm. It catalyses the reaction L-threonylcarbamoyladenylate + adenosine(37) in tRNA = N(6)-L-threonylcarbamoyladenosine(37) in tRNA + AMP + H(+). Required for the formation of a threonylcarbamoyl group on adenosine at position 37 (t(6)A37) in tRNAs that read codons beginning with adenine. Is involved in the transfer of the threonylcarbamoyl moiety of threonylcarbamoyl-AMP (TC-AMP) to the N6 group of A37, together with TsaE and TsaB. TsaD likely plays a direct catalytic role in this reaction. The chain is tRNA N6-adenosine threonylcarbamoyltransferase from Prochlorococcus marinus subsp. pastoris (strain CCMP1986 / NIES-2087 / MED4).